Reading from the N-terminus, the 331-residue chain is 6-phosphogluconolactonase (331 aa).

Belongs to the cycloisomerase 2 family.

The enzyme catalyses 6-phospho-D-glucono-1,5-lactone + H2O = 6-phospho-D-gluconate + H(+). It participates in carbohydrate degradation; pentose phosphate pathway; D-ribulose 5-phosphate from D-glucose 6-phosphate (oxidative stage): step 2/3. Its function is as follows. Catalyzes the hydrolysis of 6-phosphogluconolactone to 6-phosphogluconate. This is 6-phosphogluconolactonase from Citrobacter koseri (strain ATCC BAA-895 / CDC 4225-83 / SGSC4696).